The primary structure comprises 297 residues: MSPKDLTIPTGEDGEGSVQVHLDESDKITGAKVFAVYGKGGIGKSTTSSNLSAAFSILGKRVLQIGCDPKHDSTFTLTGSLVPTVIDVLKDVDFHPEELRPEDFVFEGFNGVMCVEAGGPPAGTGCGGYVVGQTVKLLKQHHLLDDTDVVIFDVLGDVVCGGFAAPLQHADQAVVVTANDFDSIYAMNRIIAAVQAKSKNYKVRLAGCVANRSRATDEVDRFCEASDFRRLAHMPDLDAIRRSRLKKKTLFAMDEDPDVLVARAEYLRLAQSLWDGLPPMSPHSLPDREIFELLGFD.

ATP-binding positions include 41 to 46 and Lys70; that span reads GIGKST. Ser45 provides a ligand contact to Mg(2+). Residues Cys126 and Cys160 each coordinate [4Fe-4S] cluster. Residues 211–212 and 235–237 contribute to the ATP site; these read NR and PDL.

This sequence belongs to the NifH/BchL/ChlL family. Homodimer. Protochlorophyllide reductase is composed of three subunits; BchL, BchN and BchB. It depends on [4Fe-4S] cluster as a cofactor.

The catalysed reaction is chlorophyllide a + oxidized 2[4Fe-4S]-[ferredoxin] + 2 ADP + 2 phosphate = protochlorophyllide a + reduced 2[4Fe-4S]-[ferredoxin] + 2 ATP + 2 H2O. The protein operates within porphyrin-containing compound metabolism; bacteriochlorophyll biosynthesis (light-independent). Component of the dark-operative protochlorophyllide reductase (DPOR) that uses Mg-ATP and reduced ferredoxin to reduce ring D of protochlorophyllide (Pchlide) to form chlorophyllide a (Chlide). This reaction is light-independent. The L component serves as a unique electron donor to the NB-component of the complex, and binds Mg-ATP. The polypeptide is Light-independent protochlorophyllide reductase iron-sulfur ATP-binding protein (Cereibacter sphaeroides (strain ATCC 17025 / ATH 2.4.3) (Rhodobacter sphaeroides)).